Consider the following 127-residue polypeptide: MYAVFQIGSKQYYVRTGQVIFIDRVKLDIGNQIEFNQVLLIRDMKNIYIGNPFIQNGKIIADILDHSLGKKIRIVKFRRRKHFRKFQGHRQCMTKIKVVKINSNNSDIECYKSVDIETKIGEEVHGA.

The protein belongs to the bacterial ribosomal protein bL21 family. As to quaternary structure, part of the 50S ribosomal subunit. Contacts protein L20.

This protein binds to 23S rRNA in the presence of protein L20. The chain is Large ribosomal subunit protein bL21 from Blochmanniella floridana.